Here is a 360-residue protein sequence, read N- to C-terminus: Protein MGF 360-1L (360 aa).

It belongs to the asfivirus MGF 360 family.

In terms of biological role, plays a role in virus cell tropism, and may be required for efficient virus replication in macrophages. The chain is Protein MGF 360-1L from Ornithodoros (relapsing fever ticks).